The primary structure comprises 245 residues: AP-1-like transcription factor YAP7 (245 aa).

The tract at residues 1–144 is disordered; the sequence is MRQRRSVVAV…NRDAQRAYRE (144 aa). Positions 74–94 are enriched in polar residues; it reads SANNDGSSKIKKVQTSNQKDQ. Composition is skewed to basic and acidic residues over residues 95–114 and 135–144; these read MTTK…KSDD and NRDAQRAYRE. The bZIP domain maps to 125 to 188; sequence VDSVEKRRRQ…SDTKENLQKS (64 aa). Residues 130 to 149 form a basic motif region; it reads KRRRQNRDAQRAYRERRTTR. Residues 153 to 181 form a leucine-zipper region; sequence LEEKVEMLHNLVDDWQRKYKLLESEFSDT.

Belongs to the bZIP family. YAP subfamily. Homodimer.

It localises to the nucleus. Its function is as follows. Probable transcription activator linked to cell cycle that induces transcription activation of genes in the environmental stress response and metabolism control pathways, like the closely related YAP5. The chain is AP-1-like transcription factor YAP7 (YAP7) from Saccharomyces cerevisiae (strain ATCC 204508 / S288c) (Baker's yeast).